A 379-amino-acid chain; its full sequence is Eukaryotic translation initiation factor 3 subunit M (379 aa).

A PCI domain is found at 179 to 341; that stretch reads RSEEASKVMI…RKVIISSVAQ (163 aa).

The protein belongs to the eIF-3 subunit M family. Component of the eukaryotic translation initiation factor 3 (eIF-3) complex.

It localises to the cytoplasm. In terms of biological role, component of the eukaryotic translation initiation factor 3 (eIF-3) complex, which is involved in protein synthesis of a specialized repertoire of mRNAs and, together with other initiation factors, stimulates binding of mRNA and methionyl-tRNAi to the 40S ribosome. The eIF-3 complex specifically targets and initiates translation of a subset of mRNAs involved in cell proliferation. In Nematostella vectensis (Starlet sea anemone), this protein is Eukaryotic translation initiation factor 3 subunit M.